The following is a 119-amino-acid chain: Holo-[acyl-carrier-protein] synthase (119 aa).

Positions 7 and 53 each coordinate Mg(2+).

The protein belongs to the P-Pant transferase superfamily. AcpS family. Mg(2+) serves as cofactor.

Its subcellular location is the cytoplasm. It catalyses the reaction apo-[ACP] + CoA = holo-[ACP] + adenosine 3',5'-bisphosphate + H(+). Functionally, transfers the 4'-phosphopantetheine moiety from coenzyme A to a Ser of acyl-carrier-protein. The sequence is that of Holo-[acyl-carrier-protein] synthase from Dehalococcoides mccartyi (strain CBDB1).